A 229-amino-acid chain; its full sequence is Heptaprenylglyceryl phosphate synthase (229 aa).

Lys-12 is a binding site for sn-glycerol 1-phosphate. Residues Asp-14 and Ser-40 each coordinate Mg(2+). Sn-glycerol 1-phosphate contacts are provided by residues 159 to 164 (YLEYSG), Gly-189, and 209 to 210 (GN).

The protein belongs to the GGGP/HepGP synthase family. Group I subfamily. Homodimer. It depends on Mg(2+) as a cofactor.

The enzyme catalyses sn-glycerol 1-phosphate + all-trans-heptaprenyl diphosphate = 3-heptaprenyl-sn-glycero-1-phosphate + diphosphate. The protein operates within membrane lipid metabolism; glycerophospholipid metabolism. Its function is as follows. Prenyltransferase that catalyzes in vivo the transfer of the heptaprenyl moiety of heptaprenyl pyrophosphate (HepPP; 35 carbon atoms) to the C3 hydroxyl of sn-glycerol-1-phosphate (G1P), producing heptaprenylglyceryl phosphate (HepGP). This reaction is an ether-bond-formation step in the biosynthesis of archaea-type G1P-based membrane lipids found in Bacillales. The chain is Heptaprenylglyceryl phosphate synthase from Bacillus thuringiensis (strain Al Hakam).